We begin with the raw amino-acid sequence, 127 residues long: Protein LLP homolog (127 aa).

Positions 1–21 (MAKSLRSKWKRKMRAEKRKKN) are enriched in basic residues. Residues 1–24 (MAKSLRSKWKRKMRAEKRKKNAPK) are disordered. Glycyl lysine isopeptide (Lys-Gly) (interchain with G-Cter in SUMO2) cross-links involve residues Lys65 and Lys72. A compositionally biased stretch (basic residues) spans 98 to 120 (RQRKRLKAKRERKKGKSKVKAMK). The tract at residues 98–127 (RQRKRLKAKRERKKGKSKVKAMKAAKGLTW) is disordered.

It belongs to the learning-associated protein family. As to quaternary structure, interacts with CTCF, MYO1C and with the transcriptional machinery, including RNA polymerase II and TBP.

The protein resides in the nucleus. It is found in the nucleolus. Its subcellular location is the chromosome. In terms of biological role, in hippocampal neurons, regulates dendritic and spine growth and synaptic transmission. The sequence is that of Protein LLP homolog (LLPH) from Bos taurus (Bovine).